The sequence spans 145 residues: Putative nickel-responsive regulator (145 aa).

Ni(2+)-binding residues include H77, H88, H90, and C96.

Belongs to the transcriptional regulatory CopG/NikR family. Ni(2+) is required as a cofactor.

Functionally, transcriptional regulator. This Rhizobium rhizogenes (strain K84 / ATCC BAA-868) (Agrobacterium radiobacter) protein is Putative nickel-responsive regulator.